The following is a 93-amino-acid chain: Small ribosomal subunit protein uS19 (93 aa).

It belongs to the universal ribosomal protein uS19 family.

Its function is as follows. Protein S19 forms a complex with S13 that binds strongly to the 16S ribosomal RNA. This is Small ribosomal subunit protein uS19 from Clostridium perfringens (strain ATCC 13124 / DSM 756 / JCM 1290 / NCIMB 6125 / NCTC 8237 / Type A).